Here is a 74-residue protein sequence, read N- to C-terminus: UPF0346 protein PEPE_1063 (74 aa).

This sequence belongs to the UPF0346 family.

In Pediococcus pentosaceus (strain ATCC 25745 / CCUG 21536 / LMG 10740 / 183-1w), this protein is UPF0346 protein PEPE_1063.